The sequence spans 147 residues: Hemoglobin subunit gamma (147 aa).

One can recognise a Globin domain in the interval 3–147 (NFTAEDKAAI…VASALASRYH (145 aa)). Heme b contacts are provided by His-64 and His-93.

Belongs to the globin family. Heterotetramer of two alpha chains and two gamma chains in fetal hemoglobin (Hb F). Red blood cells.

Gamma chains make up the fetal hemoglobin F, in combination with alpha chains. In Alouatta belzebul (Red-handed howler monkey), this protein is Hemoglobin subunit gamma (HBG).